The sequence spans 780 residues: Gelsolin (780 aa).

A signal peptide spans 1-25 (MAPYCSSLRSALLVLALCALSPSHA). Residues 28–48 (ASRGRAQERAPQSRVSETRPS) are disordered. The interval 51 to 174 (VVEHPEFLKA…YKKGGVASGF (124 aa)) is actin-severing. Residues 74-155 (FDLVPVPPNL…EVQGFESSTF (82 aa)) form a Gelsolin-like 1 repeat. Tyr84 carries the phosphotyrosine modification. Gly90, Asp91, Glu122, Asp134, Gly139, and Ala141 together coordinate Ca(2+). The actin-actin interfilament contact point stretch occupies residues 121–124 (DESG). Residue 160 to 167 (KSGLKYKK) coordinates a 1,2-diacyl-sn-glycero-3-phospho-(1D-myo-inositol-4,5-bisphosphate). Ca(2+) is bound at residue Val170. A 1,2-diacyl-sn-glycero-3-phospho-(1D-myo-inositol-4,5-bisphosphate) is bound at residue 186 to 194 (RLFQVKGRR). Residues 196–268 (VRATEVPVSW…SEEGSEPEAM (73 aa)) form a Gelsolin-like 2 repeat. Positions 211 and 212 each coordinate Ca(2+). An intrachain disulfide couples Cys213 to Cys226. The Ca(2+) site is built by Glu234, Asp284, Glu327, Asp328, and Glu352. Residues 244 to 286 (GIRDNERSGRAQVHVSEEGSEPEAMLQVLGPKPDLPQGTEDTA) are disordered. A Gelsolin-like 3 repeat occupies 315–387 (DENPFAQSAL…LPEGGETPLF (73 aa)). A phosphotyrosine mark is found at Tyr407 and Tyr463. An actin-binding, Ca-sensitive region spans residues 432 to 780 (AAQHGMDDDG…LDRALAELAA (349 aa)). One copy of the Gelsolin-like 4 repeat lies at 453–534 (SNKVLVDPAT…VQGKEPAHLM (82 aa)). Ca(2+)-binding residues include Gly469, Asp470, Glu500, Asp512, Gly517, Pro519, and Thr549. Residues 576 to 640 (AVEVMPKAGA…EEGSEPDGFW (65 aa)) form a Gelsolin-like 5 repeat. N6-acetyllysine is present on Lys582. Ca(2+) contacts are provided by Asn589 and Asp590. Residue Tyr601 is modified to Phosphotyrosine. Residue Glu612 participates in Ca(2+) binding. Position 649 is a phosphotyrosine (Tyr649). A Gelsolin-like 6 repeat occupies 679–754 (IEEVPGELMQ…VRQGFEPPSF (76 aa)). Ca(2+) is bound by residues Asp694, Asp695, and Glu717. Thr740 bears the Phosphothreonine mark.

Belongs to the villin/gelsolin family. In terms of assembly, binds to actin and to fibronectin. Identified in a complex composed of ACTA1, COBL, GSN and TMSB4X. Interacts with the inactive form of EIF2AK2/PKR. Interacts with FLII. Phosphorylated on tyrosine residues in vitro.

Its subcellular location is the secreted. The protein localises to the cytoplasm. It localises to the cytoskeleton. Functionally, calcium-regulated, actin-modulating protein that binds to the plus (or barbed) ends of actin monomers or filaments, preventing monomer exchange (end-blocking or capping). It can promote the assembly of monomers into filaments (nucleation) as well as sever filaments already formed. Plays a role in ciliogenesis. This chain is Gelsolin (Gsn), found in Rattus norvegicus (Rat).